We begin with the raw amino-acid sequence, 329 residues long: DNA-directed RNA polymerase subunit alpha (329 aa).

An alpha N-terminal domain (alpha-NTD) region spans residues 1 to 234; sequence MQGSVTEFLR…EQLDAFVELR (234 aa). The interval 248–329 is alpha C-terminal domain (alpha-CTD); that stretch reads FDPILLRPVD…WPPASLVDDL (82 aa).

This sequence belongs to the RNA polymerase alpha chain family. Homodimer. The RNAP catalytic core consists of 2 alpha, 1 beta, 1 beta' and 1 omega subunit. When a sigma factor is associated with the core the holoenzyme is formed, which can initiate transcription.

The enzyme catalyses RNA(n) + a ribonucleoside 5'-triphosphate = RNA(n+1) + diphosphate. DNA-dependent RNA polymerase catalyzes the transcription of DNA into RNA using the four ribonucleoside triphosphates as substrates. This Shewanella violacea (strain JCM 10179 / CIP 106290 / LMG 19151 / DSS12) protein is DNA-directed RNA polymerase subunit alpha.